A 407-amino-acid polypeptide reads, in one-letter code: Protein CNPPD1 (407 aa).

Residues 233–253 (CLLAVAYVSSVALAVASVAVI) traverse the membrane as a helical segment.

It belongs to the CNPPD1 family.

Its subcellular location is the membrane. The sequence is that of Protein CNPPD1 (Cnppd1) from Mus musculus (Mouse).